The sequence spans 48 residues: Hemoglobin subunit beta-B (48 aa).

Residues 2–48 (EWTDAERGAILSLWGKIDPDELGPALLARXXLVYXXTQRYFASFGDL) enclose the Globin domain.

Belongs to the globin family. As to quaternary structure, heterotetramer of two alpha chains and two beta chains. Red blood cells.

Its function is as follows. Involved in oxygen transport from gills to the various peripheral tissues. This Catostomus clarkii (Desert sucker) protein is Hemoglobin subunit beta-B.